A 277-amino-acid polypeptide reads, in one-letter code: Hydroxypyruvate/pyruvate aldolase (277 aa).

The Proton acceptor role is filled by His-54. A divalent metal cation-binding residues include Glu-158 and Asp-184.

The protein belongs to the HpcH/HpaI aldolase family. It depends on a divalent metal cation as a cofactor.

The catalysed reaction is D-glyceraldehyde + 3-hydroxypyruvate = (3R,4S,5R)-3,4,5,6-tetrahydroxy-2-oxohexanoate. It catalyses the reaction D-glyceraldehyde + 3-hydroxypyruvate = 2-dehydro-D-gluconate. It carries out the reaction D-glyceraldehyde + 3-hydroxypyruvate = 2-dehydro-D-galactonate. The enzyme catalyses D-glyceraldehyde + pyruvate = 2-dehydro-3-deoxy-L-galactonate. Its function is as follows. Aldolase which can catalyze in vitro the aldolisation reaction between hydroxypyruvate (HPA) or pyruvate (PA) and D-glyceraldehyde (D-GA). The condensation of hydroxypyruvate and D-glyceraldehyde produces (3R,4S,5R)-3,4,5,6-tetrahydroxy-2-oxohexanoate as the major product, 2-dehydro-D-gluconate and 2-dehydro-D-galactonate. The condensation of pyruvate and D-glyceraldehyde produces 2-dehydro-3-deoxy-L-galactonate as the major product. This chain is Hydroxypyruvate/pyruvate aldolase, found in Deinococcus radiodurans (strain ATCC 13939 / DSM 20539 / JCM 16871 / CCUG 27074 / LMG 4051 / NBRC 15346 / NCIMB 9279 / VKM B-1422 / R1).